A 330-amino-acid polypeptide reads, in one-letter code: Serpentine receptor class J-38 (330 aa).

7 consecutive transmembrane segments (helical) span residues 6–26, 43–63, 98–118, 135–155, 200–220, 253–273, and 285–305; these read IYIF…PIFV, LLLF…VVPI, LVAS…LVIY, LLLS…LGYA, TIIW…LALL, IPIV…IFGI, and GALG…LPIF.

Belongs to the nematode receptor-like protein srj family.

It is found in the membrane. The sequence is that of Serpentine receptor class J-38 (srj-38) from Caenorhabditis elegans.